Reading from the N-terminus, the 293-residue chain is DDRGK domain-containing protein 1 (293 aa).

The Lumenal portion of the chain corresponds to methionine 1 to isoleucine 6. A helical membrane pass occupies residues tyrosine 7–alanine 27. Residues lysine 28 to alanine 293 lie on the Cytoplasmic side of the membrane. Disordered regions lie at residues valine 30–glutamate 151 and threonine 273–alanine 293. 2 stretches are compositionally biased toward basic and acidic residues: residues lysine 90–glutamate 126 and glutamate 133–glutamate 151.

It belongs to the DDRGK1 family.

The protein resides in the endoplasmic reticulum membrane. Substrate adapter for ufmylation, the covalent attachment of the ubiquitin-like modifier UFM1 to substrate proteins. This Monosiga brevicollis (Choanoflagellate) protein is DDRGK domain-containing protein 1.